We begin with the raw amino-acid sequence, 140 residues long: Nucleoside diphosphate kinase (140 aa).

Positions 11, 59, 87, 93, 104, and 114 each coordinate ATP. Histidine 117 functions as the Pros-phosphohistidine intermediate in the catalytic mechanism.

This sequence belongs to the NDK family. In terms of assembly, homotetramer. The cofactor is Mg(2+).

It localises to the cytoplasm. The enzyme catalyses a 2'-deoxyribonucleoside 5'-diphosphate + ATP = a 2'-deoxyribonucleoside 5'-triphosphate + ADP. It catalyses the reaction a ribonucleoside 5'-diphosphate + ATP = a ribonucleoside 5'-triphosphate + ADP. In terms of biological role, major role in the synthesis of nucleoside triphosphates other than ATP. The ATP gamma phosphate is transferred to the NDP beta phosphate via a ping-pong mechanism, using a phosphorylated active-site intermediate. This is Nucleoside diphosphate kinase from Francisella tularensis subsp. tularensis (strain SCHU S4 / Schu 4).